The following is a 135-amino-acid chain: Large ribosomal subunit protein uL16 (135 aa).

The protein belongs to the universal ribosomal protein uL16 family. As to quaternary structure, part of the 50S ribosomal subunit.

In terms of biological role, binds 23S rRNA and is also seen to make contacts with the A and possibly P site tRNAs. The chain is Large ribosomal subunit protein uL16 from Desulforapulum autotrophicum (strain ATCC 43914 / DSM 3382 / VKM B-1955 / HRM2) (Desulfobacterium autotrophicum).